The chain runs to 424 residues: Isoflavipucine cluster transcription factor ATEG_00326 (424 aa).

The zn(2)-C6 fungal-type DNA-binding region spans 10–38 (CDRCHGQKLRCIHSGGGPCVRCAKAKATC). A disordered region spans residues 265 to 286 (ARMQTPEGTPERTSESSPSGPP).

Its subcellular location is the nucleus. Transcription factor that regulates the expression of the gene cluster that mediates the biosynthesis of isoflavipucine. This chain is Isoflavipucine cluster transcription factor ATEG_00326, found in Aspergillus terreus (strain NIH 2624 / FGSC A1156).